A 540-amino-acid chain; its full sequence is Chaperonin GroEL (540 aa).

Residues 30–33, 87–91, glycine 414, 479–481, and aspartate 495 contribute to the ATP site; these read TLGP, DGTTT, and NAL.

The protein belongs to the chaperonin (HSP60) family. As to quaternary structure, forms a cylinder of 14 subunits composed of two heptameric rings stacked back-to-back. Interacts with the co-chaperonin GroES.

Its subcellular location is the cytoplasm. The enzyme catalyses ATP + H2O + a folded polypeptide = ADP + phosphate + an unfolded polypeptide.. Functionally, together with its co-chaperonin GroES, plays an essential role in assisting protein folding. The GroEL-GroES system forms a nano-cage that allows encapsulation of the non-native substrate proteins and provides a physical environment optimized to promote and accelerate protein folding. The sequence is that of Chaperonin GroEL from Carboxydothermus hydrogenoformans (strain ATCC BAA-161 / DSM 6008 / Z-2901).